A 216-amino-acid chain; its full sequence is Peroxiredoxin (216 aa).

A Thioredoxin domain is found at 2 to 158 (VVIGEKFPEV…ILRLVKALKV (157 aa)). The active-site Cysteine sulfenic acid (-SOH) intermediate is the cysteine 46. A substrate-binding site is contributed by arginine 121. A disulfide bridge links cysteine 205 with cysteine 211.

It belongs to the peroxiredoxin family. Prx6 subfamily. In terms of assembly, homodecamer. Pentamer of dimers that assemble into a ring structure.

The protein localises to the cytoplasm. The enzyme catalyses a hydroperoxide + [thioredoxin]-dithiol = an alcohol + [thioredoxin]-disulfide + H2O. Thiol-specific peroxidase that catalyzes the reduction of hydrogen peroxide and organic hydroperoxides to water and alcohols, respectively. Plays a role in cell protection against oxidative stress by detoxifying peroxides. The polypeptide is Peroxiredoxin (Thermococcus kodakarensis (strain ATCC BAA-918 / JCM 12380 / KOD1) (Pyrococcus kodakaraensis (strain KOD1))).